The following is a 1291-amino-acid chain: Ethylene-insensitive protein 2.2 (1291 aa).

The next 6 helical transmembrane spans lie at 18 to 38 (ALPALGPGLLIAIGYVDPGKW), 48 to 68 (FGFDLVLPMLIFNFVAILCQY), 96 to 116 (FLGVQAALSVIALDLTMILGI), 128 to 148 (LSTCVFLAAVDAVLFPVFATL), 155 to 175 (SFLSTCIAGFLLLLYFFGVLI), and 195 to 215 (SAFALMSLLGASIMPHNFFLH). Asn-227 is a glycosylation site (N-linked (GlcNAc...) asparagine). The next 7 helical transmembrane spans lie at 231 to 251 (GALCLNHFFAILCIFSGIYLV), 253 to 273 (YVLMNSAANVFYSTGLVLLTF), 288 to 308 (VALCVFSLILFFANHITALTW), 335 to 355 (IIAVVPALYCVWTSGVEGIYQ), 356 to 376 (LLIFTQVMVALLLPSSVIPLF), 393 to 413 (FLEFLALISFMGMLGIKIIFV), and 441 to 461 (VLLITACSSFCLMLWLAATPL). The tract at residues 498 to 518 (TEEESIGGQEQLSGPGKSAES) is disordered. A glycan (N-linked (GlcNAc...) asparagine) is linked at Asn-550. A disordered region spans residues 614-662 (AEKEDDEGDSWEPEESSKGVPGSTSSLTSDGPGSFRSLSGKSDEGGNGA). The segment covering 617-627 (EDDEGDSWEPE) has biased composition (acidic residues). The span at 635-653 (GSTSSLTSDGPGSFRSLSG) shows a compositional bias: polar residues. 2 positions are modified to phosphoserine: Ser-647 and Ser-664. Disordered regions lie at residues 742–768 (QIHSSLGDSPNHLRVPSNIDSSYGGQR) and 787–808 (GPSRSIADSSERRYSSVHTLPS). Positions 759-768 (NIDSSYGGQR) are enriched in polar residues. Thr-818 is subject to Phosphothreonine. The interval 836–856 (GSSSLNGQMDSPAPISPSLGP) is disordered. Asn-891 carries N-linked (GlcNAc...) asparagine glycosylation. Ser-923 carries the post-translational modification Phosphoserine. An N-linked (GlcNAc...) asparagine glycan is attached at Asn-1027. Residues 1210–1229 (HRSSPPVSNGMLPPASKPGR) are disordered. The Nuclear localization signal motif lies at 1262–1269 (DVAFPKGK).

This sequence belongs to the NRAMP (TC 2.A.55) family.

It is found in the endoplasmic reticulum membrane. It localises to the nucleus. The protein resides in the cytoplasm. Its function is as follows. Central factor in signaling pathways regulated by ethylene (ET) and involved in various processes including development, plant defense, senescence, nucleotide sugar flux, and tropisms. Trafficking signal inducing ethylene response. The nuclear localization is both necessary and sufficient to activate EIN3-mediated transcription and ethylene responses. This chain is Ethylene-insensitive protein 2.2, found in Populus trichocarpa (Western balsam poplar).